The primary structure comprises 674 residues: Inorganic pyrophosphatase TTM2 (674 aa).

In terms of domain architecture, CYTH spans 248 to 410; it reads SPTYILKSRK…PRTYIEQIQL (163 aa). Disordered regions lie at residues 457–498 and 619–640; these read KNLK…SPAN and RSRL…SKSS. The span at 484-496 shows a compositional bias: basic and acidic residues; it reads SDRRYEERNHDSP. Positions 623–640 are enriched in low complexity; that stretch reads ARTGSSNSGNRGRSSKSS. Residues 650-670 form a helical membrane-spanning segment; the sequence is LPLVLTVAICSIGIIVIKSYI.

Mg(2+) is required as a cofactor. As to expression, predominantly expressed in the shoot apices of inflorescences.

Its subcellular location is the mitochondrion outer membrane. The enzyme catalyses diphosphate + H2O = 2 phosphate + H(+). Functionally, exhibits pyrophosphatase activity with stronger affinity for pyrophosphate (PPi), moderate affinity for ATP and ADP, and weak affinity for tripolyphosphate (PPPi). No activity observed toward uridine substrate. Negative regulator of the salicylic acid (SA)-mediated amplification of defense responses against both virulent and avirulent pathogens, including oomycetes (e.g. H.arabidopsidis) and bacteria (e.g. P.syringae). Represses systemic acquired resistance (SAR). This is Inorganic pyrophosphatase TTM2 from Arabidopsis thaliana (Mouse-ear cress).